The chain runs to 350 residues: Putative deoxyribonuclease-2 (350 aa).

Belongs to the DNase II family.

The chain is Putative deoxyribonuclease-2 from Burkholderia thailandensis (strain ATCC 700388 / DSM 13276 / CCUG 48851 / CIP 106301 / E264).